The sequence spans 66 residues: Ocellatin-PT5 (66 aa).

Residues 1–22 (MAFLKKSLFLVLFLGLVSLSIC) form the signal peptide. Residues 23–39 (DEEKRQDEDDDDDDDEE) constitute a propeptide that is removed on maturation. A Valine amide modification is found at Val66.

As to expression, expressed by the skin glands.

The protein localises to the secreted. In terms of biological role, has antibacterial activity against Gram-negative bacterium E.coli ATCC 25922 (MIC=300 uM) but not against S.pneumoniae ATCC 700603, S.choleraesuis ATCC 14028 or Gram-positive bacterium S.aureus ATCC 29313. Shows very little hemolytic activity and no cytotoxicity. This Leptodactylus pustulatus (Ceara white-lipped frog) protein is Ocellatin-PT5.